Here is a 99-residue protein sequence, read N- to C-terminus: Aspartyl/glutamyl-tRNA(Asn/Gln) amidotransferase subunit C (99 aa).

The protein belongs to the GatC family. In terms of assembly, heterotrimer of A, B and C subunits.

The catalysed reaction is L-glutamyl-tRNA(Gln) + L-glutamine + ATP + H2O = L-glutaminyl-tRNA(Gln) + L-glutamate + ADP + phosphate + H(+). It carries out the reaction L-aspartyl-tRNA(Asn) + L-glutamine + ATP + H2O = L-asparaginyl-tRNA(Asn) + L-glutamate + ADP + phosphate + 2 H(+). Functionally, allows the formation of correctly charged Asn-tRNA(Asn) or Gln-tRNA(Gln) through the transamidation of misacylated Asp-tRNA(Asn) or Glu-tRNA(Gln) in organisms which lack either or both of asparaginyl-tRNA or glutaminyl-tRNA synthetases. The reaction takes place in the presence of glutamine and ATP through an activated phospho-Asp-tRNA(Asn) or phospho-Glu-tRNA(Gln). The protein is Aspartyl/glutamyl-tRNA(Asn/Gln) amidotransferase subunit C of Mycobacterium marinum (strain ATCC BAA-535 / M).